A 103-amino-acid polypeptide reads, in one-letter code: Histone H4.2 (103 aa).

The segment covering 1–14 (MSGRGKGGKGLGKG) has biased composition (gly residues). The disordered stretch occupies residues 1 to 20 (MSGRGKGGKGLGKGGAKRHR). An N6-acetyl-N6-methyllysine; alternate modification is found at Lys6. 3 positions are modified to N6-methyllysine; alternate: Lys6, Lys9, and Lys13. Lys13 carries the post-translational modification N6-acetyl-N6-methyllysine; alternate. Residues 17–21 (KRHRK) mediate DNA binding. Lys92 carries the post-translational modification N6-glutaryllysine.

The protein belongs to the histone H4 family. As to quaternary structure, the nucleosome is a histone octamer containing two molecules each of H2A, H2B, H3 and H4 assembled in one H3-H4 heterotetramer and two H2A-H2B heterodimers. The octamer wraps approximately 147 bp of DNA. In terms of processing, glutarylation at Lys-92 (H4K91glu) destabilizes nucleosomes by promoting dissociation of the H2A-H2B dimers from nucleosomes.

The protein localises to the nucleus. Its subcellular location is the chromosome. Functionally, core component of nucleosome. Nucleosomes wrap and compact DNA into chromatin, limiting DNA accessibility to the cellular machineries which require DNA as a template. Histones thereby play a central role in transcription regulation, DNA repair, DNA replication and chromosomal stability. DNA accessibility is regulated via a complex set of post-translational modifications of histones, also called histone code, and nucleosome remodeling. The polypeptide is Histone H4.2 (hhfB) (Emericella nidulans (strain FGSC A4 / ATCC 38163 / CBS 112.46 / NRRL 194 / M139) (Aspergillus nidulans)).